A 71-amino-acid chain; its full sequence is ATP synthase subunit c (71 aa).

2 helical membrane-spanning segments follow: residues 5–25 and 47–67; these read AIGI…AIIV and FIGA…AFLL.

Belongs to the ATPase C chain family. As to quaternary structure, F-type ATPases have 2 components, F(1) - the catalytic core - and F(0) - the membrane proton channel. F(1) has five subunits: alpha(3), beta(3), gamma(1), delta(1), epsilon(1). F(0) has three main subunits: a(1), b(2) and c(10-14). The alpha and beta chains form an alternating ring which encloses part of the gamma chain. F(1) is attached to F(0) by a central stalk formed by the gamma and epsilon chains, while a peripheral stalk is formed by the delta and b chains.

Its subcellular location is the cell membrane. Functionally, f(1)F(0) ATP synthase produces ATP from ADP in the presence of a proton or sodium gradient. F-type ATPases consist of two structural domains, F(1) containing the extramembraneous catalytic core and F(0) containing the membrane proton channel, linked together by a central stalk and a peripheral stalk. During catalysis, ATP synthesis in the catalytic domain of F(1) is coupled via a rotary mechanism of the central stalk subunits to proton translocation. Its function is as follows. Key component of the F(0) channel; it plays a direct role in translocation across the membrane. A homomeric c-ring of between 10-14 subunits forms the central stalk rotor element with the F(1) delta and epsilon subunits. The chain is ATP synthase subunit c from Shouchella clausii (strain KSM-K16) (Alkalihalobacillus clausii).